Consider the following 74-residue polypeptide: Amphipathic peptide CT1 (74 aa).

The first 23 residues, 1 to 23 (MKTQIVILFISMIMLQMFVQIEG), serve as a signal peptide directing secretion. Valine 37 carries the valine amide modification. Residues 41–74 (GLRNLDDLDDLDLDHLFDSDVSDADLRLLKQMFR) constitute a propeptide that is removed on maturation.

It belongs to the non-disulfide-bridged peptide (NDBP) superfamily. Short antimicrobial peptide (group 4) family. Expressed by the venom gland.

The protein localises to the secreted. It is found in the target cell membrane. Antimicrobial peptide that is rapidly bactericidal against Gram-positive bacteria (MIC=12.5 ug/ml against S.aureus, and MIC=100 ug/ml against M.luteus). Is also active against clinical antibiotics-resistant bacterial strains. In Scorpiops tibetanus (Scorpion), this protein is Amphipathic peptide CT1.